Here is a 96-residue protein sequence, read N- to C-terminus: Protein FPV129 (96 aa).

A run of 2 helical transmembrane segments spans residues 36 to 56 (IILD…FVII) and 71 to 91 (LFLL…LYIV).

The protein belongs to the chordopoxvirinae L2 family.

Its subcellular location is the virion membrane. It localises to the host cytoplasm. Its function is as follows. Early protein involved in early virion morphogenesis. Participates in the formation and elongation of crescent-shaped membrane precursors of immature virions in cytoplasmic factories. The protein is Protein FPV129 of Vertebrata (FPV).